Consider the following 603-residue polypeptide: Growth-regulating factor 6 (603 aa).

The segment at 34-58 is disordered; the sequence is KHGRGNAGDQEHEWRPPAKQARGGD. The QLQ domain maps to 158–193; the sequence is PFTPSQWIELEHQALIYKYLAANSPVPHSLLIPIRR. A WRC domain is found at 223 to 267; that stretch reads DPEPGRCRRTDGKKWRCSRDAVADQKYCERHMNRGRHRSRKHVEG. 2 short sequence motifs (bipartite nuclear localization signal) span residues 228 to 238 and 256 to 263; these read RCRRTDGKKWR and RGRHRSRK. Positions 561-571 are enriched in low complexity; the sequence is FGSVSSSTGSS. The segment at 561–582 is disordered; sequence FGSVSSSTGSSPRLENHSVYDG.

The protein belongs to the GRF family.

Its subcellular location is the nucleus. In terms of biological role, transcription activator that plays a regulatory role in gibberellin-induced stem elongation. This Oryza sativa subsp. japonica (Rice) protein is Growth-regulating factor 6 (GRF6).